We begin with the raw amino-acid sequence, 358 residues long: Peptide chain release factor 1 (358 aa).

An N5-methylglutamine modification is found at Gln-237.

It belongs to the prokaryotic/mitochondrial release factor family. Post-translationally, methylated by PrmC. Methylation increases the termination efficiency of RF1.

Its subcellular location is the cytoplasm. Its function is as follows. Peptide chain release factor 1 directs the termination of translation in response to the peptide chain termination codons UAG and UAA. The chain is Peptide chain release factor 1 from Streptomyces coelicolor (strain ATCC BAA-471 / A3(2) / M145).